Here is a 7031-residue protein sequence, read N- to C-terminus: Extracellular matrix-binding protein EbhB (7031 aa).

A signal peptide spans 1–39 (MNYRDKIQKFSIRKYTVGTFSTVIATLVFLGFNTSQAHA). A compositionally biased stretch (polar residues) spans 41 to 59 (ETNQPASVVKQKQQSNNEQ). Disordered stretches follow at residues 41 to 86 (ETNQ…HENE), 99 to 152 (KVAQ…GNDN), 250 to 277 (PQRQ…PRSV), 1342 to 1373 (NNIT…ATTD), and 2418 to 2438 (TITP…TLTA). Residues 65–80 (SQVQNSQNSQNGQSLS) show a composition bias toward low complexity. Residues 99–117 (KVAQSSTTNDEQPASQNVN) are compositionally biased toward polar residues. The span at 130–140 (PDKEQSKHKQN) shows a compositional bias: basic and acidic residues. 4 stretches are compositionally biased toward polar residues: residues 141-151 (ESQSANKNGND), 250-266 (PQRQ…QTRS), 1360-1373 (FRTT…ATTD), and 2427-2438 (HSVSSNPSTLTA). FIVAR domains lie at 2524–2580 (AKNH…VSDA), 2610–2666 (SKNN…ISDE), 2687–2750 (DTHA…VQSA), 2780–2836 (AKTK…IAAE), 2864–2919 (AKTQ…IRQN), 2947–3002 (AKNQ…INTN), 3030–3085 (AKTQ…INDK), 3154–3212 (AMTK…VNQK), 3280–3339 (AMTG…VNNA), 3407–3465 (AMGN…VNRA), 3533–3591 (AMGN…VTEA), 3659–3717 (AMNT…ITQK), 3785–3843 (AMAS…VEAA), 3911–3969 (AMGN…VEQA), 4037–4095 (AMGT…VTAA), 4163–4221 (AMKG…ITQA), 4289–4347 (QMGN…VEAA), 4415–4473 (AMAN…VENA), 4541–4599 (AMGT…INQI), 4667–4725 (AMGQ…VDRA), 4793–4851 (AMNS…VDNA), 4919–4977 (AMGA…INGM), 5045–5103 (AMTA…VNSA), 5171–5229 (AMKG…ITQV), 5297–5355 (AMHS…VEQA), 5423–5481 (AMGQ…VERA), 5549–5607 (AMTA…VTNA), 5675–5733 (AMKG…INQA), 5801–5859 (AMTN…VETA), 5927–5985 (AMSN…VEQA), 6053–6111 (AMNQ…INQK), 6179–6236 (AMGN…VQAA), 6304–6362 (AMGQ…VEAA), 6430–6488 (AMQR…VEQA), 6556–6614 (AMDQ…VTAA), 6682–6740 (AMNQ…VTQA), 6818–6866 (DKDQ…VEAA), and 6934–6992 (AMGN…VEAA).

This chain is Extracellular matrix-binding protein EbhB (ebhB), found in Staphylococcus aureus (strain Newman).